The following is a 153-amino-acid chain: MSTKKIILKSSDGHSFEVEEEAARQCQIIIAHMSENDCTDNGIPLPNVTGKILAMVIEYCNKHHVDAANPCSDDDLKKWDKEFMEKDTSTIFDLIKAANYLNIKSLFDLACQTVAEIIKGNTPEQIREFFNIENDLTPEEEAAIRRENKWAFE.

The interval 95 to 153 (IKAANYLNIKSLFDLACQTVAEIIKGNTPEQIREFFNIENDLTPEEEAAIRRENKWAFE) is interaction with the F-box domain of F-box proteins.

The protein belongs to the SKP1 family. As to quaternary structure, part of a SCF (SKP1-cullin-F-box) protein ligase complex. Interacts with CPR1/CPR30 and At3g61590. Expressed in leaves, shoot apical meristem (SAM), roots, flowers and pollen.

Its subcellular location is the nucleus. The protein operates within protein modification; protein ubiquitination. Its function is as follows. Involved in ubiquitination and subsequent proteasomal degradation of target proteins. Together with CUL1, RBX1 and a F-box protein, it forms a SCF E3 ubiquitin ligase complex. The functional specificity of this complex depends on the type of F-box protein. In the SCF complex, it serves as an adapter that links the F-box protein to CUL1. The sequence is that of SKP1-like protein 9 (ASK9) from Arabidopsis thaliana (Mouse-ear cress).